Here is a 63-residue protein sequence, read N- to C-terminus: Small ribosomal subunit protein eS17 (63 aa).

It belongs to the eukaryotic ribosomal protein eS17 family.

This chain is Small ribosomal subunit protein eS17, found in Methanococcus maripaludis (strain C6 / ATCC BAA-1332).